The following is a 277-amino-acid chain: Release factor glutamine methyltransferase (277 aa).

Residues 119-123 (GTGTG), D142, and N184 each bind S-adenosyl-L-methionine. 184-187 (NPPY) contributes to the substrate binding site.

Belongs to the protein N5-glutamine methyltransferase family. PrmC subfamily.

It catalyses the reaction L-glutaminyl-[peptide chain release factor] + S-adenosyl-L-methionine = N(5)-methyl-L-glutaminyl-[peptide chain release factor] + S-adenosyl-L-homocysteine + H(+). In terms of biological role, methylates the class 1 translation termination release factors RF1/PrfA and RF2/PrfB on the glutamine residue of the universally conserved GGQ motif. This is Release factor glutamine methyltransferase from Enterococcus faecalis (strain ATCC 700802 / V583).